The chain runs to 139 residues: Small ribosomal subunit protein uS11A (139 aa).

The tract at residues 119 to 139 is disordered; it reads DVTPIPTDSTRRKGGRRGRRL. Residues 130–139 show a composition bias toward basic residues; it reads RKGGRRGRRL.

It belongs to the universal ribosomal protein uS11 family. As to quaternary structure, component of the small ribosomal subunit (SSU). Mature yeast ribosomes consist of a small (40S) and a large (60S) subunit. The 40S small subunit contains 1 molecule of ribosomal RNA (18S rRNA) and at least 33 different proteins. The large 60S subunit contains 3 rRNA molecules (25S, 5.8S and 5S rRNA) and at least 46 different proteins. uS11 interacts with eS1 forming part of the mRNA exit tunnel. uS11 interacts with snoRNA U3. uS11 interacts with MPP10. Component of the ribosomal small subunit (SSU) processome composed of at least 40 protein subunits and snoRNA U3.

It is found in the cytoplasm. The protein resides in the nucleus. The protein localises to the nucleolus. Component of the ribosome, a large ribonucleoprotein complex responsible for the synthesis of proteins in the cell. The small ribosomal subunit (SSU) binds messenger RNAs (mRNAs) and translates the encoded message by selecting cognate aminoacyl-transfer RNA (tRNA) molecules. The large subunit (LSU) contains the ribosomal catalytic site termed the peptidyl transferase center (PTC), which catalyzes the formation of peptide bonds, thereby polymerizing the amino acids delivered by tRNAs into a polypeptide chain. The nascent polypeptides leave the ribosome through a tunnel in the LSU and interact with protein factors that function in enzymatic processing, targeting, and the membrane insertion of nascent chains at the exit of the ribosomal tunnel. uS11 is involved in nucleolar processing of pre-18S ribosomal RNA and ribosome assembly. The chain is Small ribosomal subunit protein uS11A (rps1401) from Schizosaccharomyces pombe (strain 972 / ATCC 24843) (Fission yeast).